The following is a 460-amino-acid chain: Argininosuccinate lyase (460 aa).

It belongs to the lyase 1 family. Argininosuccinate lyase subfamily.

The protein localises to the cytoplasm. It catalyses the reaction 2-(N(omega)-L-arginino)succinate = fumarate + L-arginine. Its pathway is amino-acid biosynthesis; L-arginine biosynthesis; L-arginine from L-ornithine and carbamoyl phosphate: step 3/3. The polypeptide is Argininosuccinate lyase (Streptococcus sanguinis (strain SK36)).